The primary structure comprises 121 residues: Trypsin/alpha-amylase inhibitor CMX1/CMX3 (121 aa).

Residues 1–24 form the signal peptide; sequence MAFKHQLILSTAILLAVLAAASAS.

It belongs to the protease inhibitor I6 (cereal trypsin/alpha-amylase inhibitor) family.

The protein localises to the secreted. This chain is Trypsin/alpha-amylase inhibitor CMX1/CMX3, found in Triticum aestivum (Wheat).